Reading from the N-terminus, the 446-residue chain is DNA repair protein RadA (446 aa).

The segment at 10–27 (CSNCGNTSPKWSGQCFDC) adopts a C4-type zinc-finger fold. 91–98 (GDPGIGKS) is a binding site for ATP. Positions 250-254 (KNRFG) match the RadA KNRFG motif motif. A lon-protease-like region spans residues 349–446 (EVYLSIAGGL…HLKDLKEIIR (98 aa)).

This sequence belongs to the RecA family. RadA subfamily.

DNA-dependent ATPase involved in processing of recombination intermediates, plays a role in repairing DNA breaks. Stimulates the branch migration of RecA-mediated strand transfer reactions, allowing the 3' invading strand to extend heteroduplex DNA faster. Binds ssDNA in the presence of ADP but not other nucleotides, has ATPase activity that is stimulated by ssDNA and various branched DNA structures, but inhibited by SSB. Does not have RecA's homology-searching function. This is DNA repair protein RadA from Rickettsia felis (strain ATCC VR-1525 / URRWXCal2) (Rickettsia azadi).